Reading from the N-terminus, the 42-residue chain is Photosystem I reaction center subunit IX (42 aa).

A helical transmembrane segment spans residues 7-27; it reads FLSTAPVLIMALLTVTAGILI.

Belongs to the PsaJ family.

The protein resides in the cellular thylakoid membrane. May help in the organization of the PsaE and PsaF subunits. The polypeptide is Photosystem I reaction center subunit IX (Crocosphaera subtropica (strain ATCC 51142 / BH68) (Cyanothece sp. (strain ATCC 51142))).